The primary structure comprises 359 residues: Ribosomal RNA large subunit methyltransferase M (359 aa).

Residues S186, 219–222 (CPGG), D238, D258, and D275 each bind S-adenosyl-L-methionine. Residue K304 is the Proton acceptor of the active site.

It belongs to the class I-like SAM-binding methyltransferase superfamily. RNA methyltransferase RlmE family. RlmM subfamily. As to quaternary structure, monomer.

It is found in the cytoplasm. It carries out the reaction cytidine(2498) in 23S rRNA + S-adenosyl-L-methionine = 2'-O-methylcytidine(2498) in 23S rRNA + S-adenosyl-L-homocysteine + H(+). In terms of biological role, catalyzes the 2'-O-methylation at nucleotide C2498 in 23S rRNA. This Vibrio parahaemolyticus serotype O3:K6 (strain RIMD 2210633) protein is Ribosomal RNA large subunit methyltransferase M.